A 367-amino-acid polypeptide reads, in one-letter code: uncharacterized protein (367 aa).

This is an uncharacterized protein from Buchnera aphidicola subsp. Acyrthosiphon pisum (strain APS) (Acyrthosiphon pisum symbiotic bacterium).